Reading from the N-terminus, the 248-residue chain is Biosynthetic peptidoglycan transglycosylase (248 aa).

The chain crosses the membrane as a helical span at residues 20–42 (WLRWLMAAPLLFAAASVLQVLIL).

It belongs to the glycosyltransferase 51 family.

The protein localises to the cell inner membrane. It carries out the reaction [GlcNAc-(1-&gt;4)-Mur2Ac(oyl-L-Ala-gamma-D-Glu-L-Lys-D-Ala-D-Ala)](n)-di-trans,octa-cis-undecaprenyl diphosphate + beta-D-GlcNAc-(1-&gt;4)-Mur2Ac(oyl-L-Ala-gamma-D-Glu-L-Lys-D-Ala-D-Ala)-di-trans,octa-cis-undecaprenyl diphosphate = [GlcNAc-(1-&gt;4)-Mur2Ac(oyl-L-Ala-gamma-D-Glu-L-Lys-D-Ala-D-Ala)](n+1)-di-trans,octa-cis-undecaprenyl diphosphate + di-trans,octa-cis-undecaprenyl diphosphate + H(+). Its pathway is cell wall biogenesis; peptidoglycan biosynthesis. Its function is as follows. Peptidoglycan polymerase that catalyzes glycan chain elongation from lipid-linked precursors. In Xanthomonas euvesicatoria pv. vesicatoria (strain 85-10) (Xanthomonas campestris pv. vesicatoria), this protein is Biosynthetic peptidoglycan transglycosylase.